A 396-amino-acid polypeptide reads, in one-letter code: Putative glutamate--cysteine ligase 2-2 (396 aa).

This sequence belongs to the glutamate--cysteine ligase type 2 family. YbdK subfamily.

It catalyses the reaction L-cysteine + L-glutamate + ATP = gamma-L-glutamyl-L-cysteine + ADP + phosphate + H(+). Its function is as follows. ATP-dependent carboxylate-amine ligase which exhibits weak glutamate--cysteine ligase activity. This chain is Putative glutamate--cysteine ligase 2-2, found in Mycolicibacterium smegmatis (strain ATCC 700084 / mc(2)155) (Mycobacterium smegmatis).